The sequence spans 400 residues: Outer membrane protein alpha (400 aa).

A signal peptide spans 1 to 20 (MKRVLLTVAMLSVFFSAMFA). The SLH domain maps to 21-81 (FFPDVPKDHW…DFIEQKMLAG (61 aa)). Residues 85–379 (DLAQVVGNLS…ESVKAYNRNL (295 aa)) are a coiled coil. 3 consecutive repeat copies span residues 208-232 (VNLH…LNNK), 251-275 (VELH…LNKK), and 326-350 (VDLH…LNMK). The segment at 208-350 (VNLHEKDIIN…SSLEEDLNMK (143 aa)) is 3 X 25 AA approximate repeat. Residues 380-400 (SILTGAFFGILGLILIAISGK) form a helical membrane-spanning segment.

Homotetramer.

It is found in the cell outer membrane. Functionally, links the outer membrane to the inner membrane. Long fibrous protein that could serve to separate the two membranes. This Thermotoga maritima (strain ATCC 43589 / DSM 3109 / JCM 10099 / NBRC 100826 / MSB8) protein is Outer membrane protein alpha (omp-alpha).